Here is a 131-residue protein sequence, read N- to C-terminus: MPVTDSIADYITRIRNAGRAKNKTTDIPYSKLRENISELLVAKGYIKSFTVITTEQFPFIRIDLKYSALGEPAIREITRVSKPGRRVYQGKDIRKYLGGLGLYILSSSKGIITDKEAREQGVGGEILFRIY.

This sequence belongs to the universal ribosomal protein uS8 family. Part of the 30S ribosomal subunit. Contacts proteins S5 and S12.

Its function is as follows. One of the primary rRNA binding proteins, it binds directly to 16S rRNA central domain where it helps coordinate assembly of the platform of the 30S subunit. In Chlorobium limicola (strain DSM 245 / NBRC 103803 / 6330), this protein is Small ribosomal subunit protein uS8.